Consider the following 503-residue polypeptide: Maturase K (503 aa).

This sequence belongs to the intron maturase 2 family. MatK subfamily.

Its subcellular location is the plastid. It localises to the chloroplast. Functionally, usually encoded in the trnK tRNA gene intron. Probably assists in splicing its own and other chloroplast group II introns. This Eucalyptus globulus subsp. globulus (Tasmanian blue gum) protein is Maturase K.